We begin with the raw amino-acid sequence, 388 residues long: Xylose isomerase (388 aa).

Catalysis depends on residues histidine 54 and aspartate 57. Glutamate 181, glutamate 217, histidine 220, aspartate 245, aspartate 255, aspartate 257, and aspartate 287 together coordinate Mg(2+).

Belongs to the xylose isomerase family. Homotetramer. Mg(2+) is required as a cofactor.

Its subcellular location is the cytoplasm. It catalyses the reaction alpha-D-xylose = alpha-D-xylulofuranose. This chain is Xylose isomerase, found in Streptomyces olivaceoviridis (Streptomyces corchorusii).